Reading from the N-terminus, the 337-residue chain is S-adenosylmethionine:tRNA ribosyltransferase-isomerase (337 aa).

This sequence belongs to the QueA family. Monomer.

The protein localises to the cytoplasm. It carries out the reaction 7-aminomethyl-7-carbaguanosine(34) in tRNA + S-adenosyl-L-methionine = epoxyqueuosine(34) in tRNA + adenine + L-methionine + 2 H(+). Its pathway is tRNA modification; tRNA-queuosine biosynthesis. Its function is as follows. Transfers and isomerizes the ribose moiety from AdoMet to the 7-aminomethyl group of 7-deazaguanine (preQ1-tRNA) to give epoxyqueuosine (oQ-tRNA). The sequence is that of S-adenosylmethionine:tRNA ribosyltransferase-isomerase from Legionella pneumophila (strain Lens).